The primary structure comprises 152 residues: Deoxyuridine 5'-triphosphate nucleotidohydrolase (152 aa).

Residues 71–73, asparagine 84, 88–90, and methionine 98 each bind substrate; these read RSG and LID.

This sequence belongs to the dUTPase family. Requires Mg(2+) as cofactor.

It carries out the reaction dUTP + H2O = dUMP + diphosphate + H(+). It participates in pyrimidine metabolism; dUMP biosynthesis; dUMP from dCTP (dUTP route): step 2/2. This enzyme is involved in nucleotide metabolism: it produces dUMP, the immediate precursor of thymidine nucleotides and it decreases the intracellular concentration of dUTP so that uracil cannot be incorporated into DNA. The protein is Deoxyuridine 5'-triphosphate nucleotidohydrolase of Erwinia tasmaniensis (strain DSM 17950 / CFBP 7177 / CIP 109463 / NCPPB 4357 / Et1/99).